Consider the following 305-residue polypeptide: MSEFNITETYLRFLEEDTEMTMPIAAIEALVTLLRIKTPETAAEMINTIKSSTEELIKSIPNSVSLRAGCDIFMRFVLRNLHLYGDWENCKQHLIENGQLFVSRAKKSRNKIAEIGVDFIADDDIILVHGYSRAVFSLLNHAANKFIRFRCVVTESRPSKQGNQLYTLLEQKGIPVTLIVDSAVGAVIDKVDKVFVGAEGVAESGGIINLVGTYSVGVLAHNARKPFYVVTESHKFVRMFPLSSDDLPMAGPPLDFTRRTDDLEDALRGPTIDYTAQEYITALITDLGVLTPSAVSEELIKMWYD.

S2 is subject to N-acetylserine. T291 bears the Phosphothreonine mark.

Belongs to the eIF-2B alpha/beta/delta subunits family. Component of the translation initiation factor 2B (eIF2B) complex which is a heterodecamer of two sets of five different subunits: alpha, beta, gamma, delta and epsilon. Subunits alpha, beta and delta comprise a regulatory subcomplex and subunits epsilon and gamma comprise a catalytic subcomplex. Within the complex, the hexameric regulatory complex resides at the center, with the two heterodimeric catalytic subcomplexes bound on opposite sides.

It localises to the cytoplasm. Its subcellular location is the cytosol. Its function is as follows. Acts as a component of the translation initiation factor 2B (eIF2B) complex, which catalyzes the exchange of GDP for GTP on the eukaryotic initiation factor 2 (eIF2) complex gamma subunit. Its guanine nucleotide exchange factor activity is repressed when bound to eIF2 complex phosphorylated on the alpha subunit, thereby limiting the amount of methionyl-initiator methionine tRNA available to the ribosome and consequently global translation is repressed. It activates the translation of GCN4 in response to low amino acid, carbon, or purine availability, by suppressing the inhibitory effects of multiple uORFs present in the leader of GCN4 mRNA. It may promote either repression or activation of GCN4 expression depending on amino acid availability. Modulation of GCN3 regulatory function in response to amino acid availability occurs post-translationally. In Saccharomyces cerevisiae (strain ATCC 204508 / S288c) (Baker's yeast), this protein is Translation initiation factor eIF2B subunit alpha.